The primary structure comprises 41 residues: GTPCKCHGYIGVYWFMLAGCPNGYGYNLSCPYFLGICCVKK.

3 disulfide bridges follow: Cys4-Cys37, Cys6-Cys30, and Cys20-Cys38.

This sequence belongs to the sea anemone type 3 (BDS) potassium channel toxin family.

It localises to the secreted. It is found in the nematocyst. Remarkably non-selective toxin, with activity on many different ion channels. Weakly and reversibly inhibits rat and human homomeric ASIC1 (isoform ASIC1a) (IC(50)=4.8 uM, and IC(50)=14.6 uM), and ASIC3 (IC(50)=15.9 uM). Molecular modeling interaction with ASIC1a suggests that this peptide hinders the collapse of acidic pockets and stabilizes nonconducting channels state. It activates several potassium channels including Kv1.1/KCNA1, Kv1.2/KCNA2, and drosophila Shaker IR. It moderately to potently inhibits potassium channels including Kv1.3/KCNA3, Kv1.4/KCNA4, Kv1.5/KCNA5, Kv1.6/KCNA6, Kv2.1/KCNB1, Kv4.2/KCND2, Kv7.1/KCNQ1, Kv7.2/Kv7.3 (KCNQ2/KCNQ3), Kv7.4/KCNQ4, hERG/KCNH2, and C.elegans QKT1. On sodium channels, it moderately to potently inhibits Nav1.1/SCN1A, Nav1.2/SCN2A, Nav1.3/SCN3A, Nav1.4/SCN4A, Nav1.5/SCN5A, Nav1.6/SCN8A, Nav1.7/SCN9A, Nav1.8/SCN10A, and B.germanica BgNav. It also moderately to potently inhibits Cav3.1/CACNA1G, Cav3.2/CACNA1H, and Cav3.3/CACNA1I. Significant shifts in the voltage-current relationship are observed on Kv and Nav, depending on the channel isoform, whereas the toxin does not seem to modulate the voltage-sensor domains of Cav channels, acting mainly as a pore blocker. Does not activate nicotinic acetylcholine receptors (nAChR), but potentiates ACh-elicited current of human alpha-7/CHRNA7 nAChR. Is also able to bind T.californica muscle-type nAChRs. In vivo, causes an excitatory effect in mice behavior. Also shows antihyperalgesic and analgesic activity in the acid-induced muscle pain mice model, and weak anti-inflammatory effect in models of acute local inflammation. This chain is Pi-stichotoxin-Hcr5b, found in Radianthus crispa (Leathery sea anemone).